The sequence spans 550 residues: Chaperonin GroEL (550 aa).

ATP is bound by residues 30-33 (TLGP), lysine 51, 87-91 (DGTTT), glycine 415, 479-481 (NAA), and aspartate 495.

This sequence belongs to the chaperonin (HSP60) family. Forms a cylinder of 14 subunits composed of two heptameric rings stacked back-to-back. Interacts with the co-chaperonin GroES.

The protein localises to the cytoplasm. It catalyses the reaction ATP + H2O + a folded polypeptide = ADP + phosphate + an unfolded polypeptide.. Its function is as follows. Together with its co-chaperonin GroES, plays an essential role in assisting protein folding. The GroEL-GroES system forms a nano-cage that allows encapsulation of the non-native substrate proteins and provides a physical environment optimized to promote and accelerate protein folding. This chain is Chaperonin GroEL, found in Polaromonas sp. (strain JS666 / ATCC BAA-500).